The following is a 110-amino-acid chain: Acylphosphatase (110 aa).

One can recognise an Acylphosphatase-like domain in the interval T21–G108. Active-site residues include R36 and N54.

Belongs to the acylphosphatase family.

It carries out the reaction an acyl phosphate + H2O = a carboxylate + phosphate + H(+). The polypeptide is Acylphosphatase (acyP) (Koribacter versatilis (strain Ellin345)).